A 421-amino-acid polypeptide reads, in one-letter code: Tyrosine--tRNA ligase (421 aa).

Y38 contacts L-tyrosine. Positions 43 to 52 match the 'HIGH' region motif; the sequence is PTGDSLHIGH. Positions 169 and 173 each coordinate L-tyrosine. Residues 231-235 carry the 'KMSKS' region motif; the sequence is KFGKS. K234 is an ATP binding site. The S4 RNA-binding domain occupies 353 to 419; that stretch reads KNLVDFLVDT…GKKKYTLVHI (67 aa).

It belongs to the class-I aminoacyl-tRNA synthetase family. TyrS type 1 subfamily. Homodimer.

The protein localises to the cytoplasm. It catalyses the reaction tRNA(Tyr) + L-tyrosine + ATP = L-tyrosyl-tRNA(Tyr) + AMP + diphosphate + H(+). Its function is as follows. Catalyzes the attachment of tyrosine to tRNA(Tyr) in a two-step reaction: tyrosine is first activated by ATP to form Tyr-AMP and then transferred to the acceptor end of tRNA(Tyr). In Lactobacillus delbrueckii subsp. bulgaricus (strain ATCC 11842 / DSM 20081 / BCRC 10696 / JCM 1002 / NBRC 13953 / NCIMB 11778 / NCTC 12712 / WDCM 00102 / Lb 14), this protein is Tyrosine--tRNA ligase.